The sequence spans 508 residues: Acyl-CoA-binding domain-containing protein 5 (508 aa).

An ACB domain is found at Y44–M133. An acyl-CoA-binding positions include I55–F64, Y75–K79, K101, and Y120. Positions A175–K215 are disordered. The stretch at K181–L214 forms a coiled coil. Residues S184, S185, S187, S191, S206, and S233 each carry the phosphoserine modification. Basic and acidic residues predominate over residues E198 to K215. A compositionally biased stretch (basic and acidic residues) spans S240–D260. The segment at S240–Y300 is disordered. Residue S303 is modified to Phosphoserine. Disordered regions lie at residues P318 to I340 and E353 to R419. The span at E353–E376 shows a compositional bias: basic and acidic residues. S405 carries the post-translational modification Phosphoserine. The segment covering D408 to S418 has biased composition (basic and acidic residues). Residues L428 to S453 are a coiled coil. The residue at position 446 (K446) is an N6-acetyllysine. Residues G480 to Y500 form a helical membrane-spanning segment.

This sequence belongs to the ATG37 family.

The protein localises to the peroxisome membrane. In terms of biological role, acyl-CoA binding protein which acts as the peroxisome receptor for pexophagy but is dispensable for aggrephagy and nonselective autophagy. Binds medium- and long-chain acyl-CoA esters. The polypeptide is Acyl-CoA-binding domain-containing protein 5 (Acbd5) (Mus musculus (Mouse)).